We begin with the raw amino-acid sequence, 530 residues long: MTTPISLSKPRVELRFKCSHLKNLDICSKSDPLIMVFDKRGEHGESIFVGQTEKINNNLNPEFKKSVIIDYHFENIQNLSFIVVDIDKEIKRVGDLEGNDIIGQYTTTLGNIISKPNKKVISEIKHKGKETGVIEITAEEIRETGHNFLFKINGTKLDKKDLFTSDPYFKIYKTSSSGNVLVYQSVVIKNTLNPNYEPVMMKLEELNNGDMFRELVFEFWDHDSVGEHDFIGLFTTNADTVLKGITREFPLINAKKAAKKSGSYKNSGVITFTDCRLVGQPTFIDYLSGGCEINLMVAIDCTASNGSPSTSTSLHYHTPSHPSQYAKSIFSVGSVLAPYDSDGNIEVLGFGGIHRGSTSHCFQFGSKKEVRGVEGVLLTYGEVIPSMSLSYPTNFKDIISYAAKKSLDGVTSKSQKYTILLILTDGEISDMNETVHEIVKASKQSPLSIVIIGIGEATFDNMNRLDGDDGNSLTDSSGQTATRDIVQFVPFNNFSANPEALATETLREIPQQLLGFMNQNNYLPMSHRLK.

C2 domains follow at residues 1-125 (MTTP…SEIK) and 130-253 (ETGV…PLIN). Ca(2+) contacts are provided by aspartate 25, aspartate 31, aspartate 85, aspartate 87, and aspartate 100. Positions 294-513 (NLMVAIDCTA…ETLREIPQQL (220 aa)) constitute a VWFA domain.

The protein belongs to the copine family. The cofactor is Ca(2+).

The protein is Copine-B (cpnB-1) of Dictyostelium discoideum (Social amoeba).